Consider the following 411-residue polypeptide: Phosphopentomutase (411 aa).

Mn(2+)-binding residues include D14, D306, H311, D347, H348, and H359.

The protein belongs to the phosphopentomutase family. Mn(2+) is required as a cofactor.

It localises to the cytoplasm. It catalyses the reaction 2-deoxy-alpha-D-ribose 1-phosphate = 2-deoxy-D-ribose 5-phosphate. It carries out the reaction alpha-D-ribose 1-phosphate = D-ribose 5-phosphate. The protein operates within carbohydrate degradation; 2-deoxy-D-ribose 1-phosphate degradation; D-glyceraldehyde 3-phosphate and acetaldehyde from 2-deoxy-alpha-D-ribose 1-phosphate: step 1/2. In terms of biological role, isomerase that catalyzes the conversion of deoxy-ribose 1-phosphate (dRib-1-P) and ribose 1-phosphate (Rib-1-P) to deoxy-ribose 5-phosphate (dRib-5-P) and ribose 5-phosphate (Rib-5-P), respectively. This Lactococcus lactis subsp. cremoris (strain MG1363) protein is Phosphopentomutase.